The sequence spans 679 residues: Transmembrane protein 214-B (679 aa).

The disordered stretch occupies residues 1–94; that stretch reads MASGAPDGKW…KKKPQSGDSV (94 aa). Residues 18–30 show a composition bias toward basic and acidic residues; it reads KSGERREGERKAL. Asn-70, Asn-298, and Asn-322 each carry an N-linked (GlcNAc...) asparagine glycan. 2 helical membrane-spanning segments follow: residues 468–488 and 606–626; these read GGFP…GSVL and LLLH…EAAV.

It belongs to the TMEM214 family. Constitutively interacts with CASP4; required for the localization of procaspase 4 to the ER.

The protein localises to the endoplasmic reticulum membrane. Functionally, critical mediator, in cooperation with CASP4, of endoplasmic reticulum-stress induced apoptosis. Required or the activation of CASP4 following endoplasmic reticulum stress. The polypeptide is Transmembrane protein 214-B (tmem214-b) (Xenopus laevis (African clawed frog)).